Reading from the N-terminus, the 101-residue chain is Immunity protein CdiI-2 (101 aa).

Specifically interacts with the truncated CT fragment of cognate toxin protein CdiA-2, which inhibits CdiA-2 tRNA nuclease activity.

In terms of biological role, immunity protein component of a toxin-immunity protein module, which functions as a cellular contact-dependent growth inhibition (CDI) system. CDI modules allow bacteria to communicate with and inhibit the growth of closely related neighboring bacteria in a contact-dependent fashion. Neutralizes the toxic activity of cognate toxin CdiA (C-terminal 301 residue CT fragment) upon expression in E.coli. Does not inhibit toxic activity of CdiA from other strains of B.pseudomallei. Expression of this cdiAIB locus in B.thailandensis confers protection against other bacteria carrying the locus; growth inhibition requires cellular contact. In Burkholderia pseudomallei (strain 1026b), this protein is Immunity protein CdiI-2 (cdiI2).